The following is a 448-amino-acid chain: N-succinylarginine dihydrolase (448 aa).

Residues Ala-19–Ser-28, Asn-110, and His-137–Arg-138 contribute to the substrate site. Glu-174 is an active-site residue. Arg-216 is a substrate binding site. His-252 is an active-site residue. Positions 254 and 366 each coordinate substrate. Catalysis depends on Cys-372, which acts as the Nucleophile.

The protein belongs to the succinylarginine dihydrolase family. As to quaternary structure, homodimer.

It catalyses the reaction N(2)-succinyl-L-arginine + 2 H2O + 2 H(+) = N(2)-succinyl-L-ornithine + 2 NH4(+) + CO2. It participates in amino-acid degradation; L-arginine degradation via AST pathway; L-glutamate and succinate from L-arginine: step 2/5. In terms of biological role, catalyzes the hydrolysis of N(2)-succinylarginine into N(2)-succinylornithine, ammonia and CO(2). The polypeptide is N-succinylarginine dihydrolase (Legionella pneumophila (strain Paris)).